The following is a 763-amino-acid chain: Disintegrin and metalloproteinase domain-containing protein 29 (763 aa).

A signal peptide spans 1–31 (MNMIEALLSMRVLFLTQVFGIFLCFPGLTKA). The propeptide occupies 32–200 (GHLHYHSSIE…ILKQSSFEDW (169 aa)). Residues Asn-164, Asn-177, and Asn-223 are each glycosylated (N-linked (GlcNAc...) asparagine). Residues 201–684 (WTHTKIVELV…KTNKKKHFFY (484 aa)) are Extracellular-facing. Positions 205–396 (KIVELVVVVD…NTRCLMENMY (192 aa)) constitute a Peptidase M12B domain. Disulfide bonds link Cys-313/Cys-390, Cys-353/Cys-375, and Cys-355/Cys-360. Residues Asn-374, Asn-424, Asn-434, Asn-475, and Asn-584 are each glycosylated (N-linked (GlcNAc...) asparagine). In terms of domain architecture, Disintegrin spans 403 to 489 (RTRCGNGVVE…ECPDDAYVED (87 aa)). A disulfide bridge links Cys-461 with Cys-481. 3 cysteine pairs are disulfide-bonded: Cys-631–Cys-642, Cys-636–Cys-648, and Cys-650–Cys-659. The region spanning 631–660 (CTPAFCNYRGICNNKHHCHCNFHWDPPNCM) is the EGF-like domain. Residues 685-705 (LLLLQLIILACLLSCLLWLLF) form a helical membrane-spanning segment. At 706 to 763 (NIKGSKRKPQVQPTPVKTKKVSKKVPSQKPSPVPSPSLPQLRMPSRSASPTSSIKSTN) the chain is on the cytoplasmic side. The interval 712-763 (RKPQVQPTPVKTKKVSKKVPSQKPSPVPSPSLPQLRMPSRSASPTSSIKSTN) is disordered. The segment covering 751–763 (RSASPTSSIKSTN) has biased composition (polar residues).

It is found in the membrane. In terms of biological role, may be involved in spermatogenesis and fertilization. Seems to be a non catalytic metalloprotease-like protein. This Mus musculus (Mouse) protein is Disintegrin and metalloproteinase domain-containing protein 29 (Adam29).